We begin with the raw amino-acid sequence, 92 residues long: Defensin-like protein 249 (92 aa).

Positions 1 to 24 are cleaved as a signal peptide; it reads MKLAAIFLASSVLLSLLPIHLSQG. 4 disulfide bridges follow: Cys34-Cys91, Cys45-Cys74, Cys53-Cys84, and Cys72-Cys86.

It belongs to the DEFL family.

The protein localises to the secreted. The sequence is that of Defensin-like protein 249 (SCRL7) from Arabidopsis thaliana (Mouse-ear cress).